The following is a 338-amino-acid chain: MTDHALLLVNLGSPASTSVADVRRYLNQFLMDPYVIDLPWPVRRLLVSLVLIKRPEQSAHAYASIWWEEGSPLVVLTRRLQAAMAEHWPHGPVEIAMRYGQPALPDVLARLAAQGVRKVTLAPLYPQFADSTVTTVIEQAKQTVSEHQLPLQMRVLQPFYEHPAYIEALAASARPYLEQGYDHLLLSFHGLPERHLKKLFPKGVKHDLRAADCCHGATAEVSSVCYRGQCLATAKAFAQSMGIPDGKWSVSFQSRLGRDKWIEPYTETRLDELAKAGVKKLLVMCPAFVADCIETLEEIGMRGSEQFVEAGGQELVLVPCLNDHPEWVRVLADMCEKA.

Fe cation-binding residues include His-189 and Glu-294.

Belongs to the ferrochelatase family.

It is found in the cytoplasm. It carries out the reaction heme b + 2 H(+) = protoporphyrin IX + Fe(2+). The protein operates within porphyrin-containing compound metabolism; protoheme biosynthesis; protoheme from protoporphyrin-IX: step 1/1. Catalyzes the ferrous insertion into protoporphyrin IX. The chain is Ferrochelatase from Pseudomonas putida (strain ATCC 47054 / DSM 6125 / CFBP 8728 / NCIMB 11950 / KT2440).